The primary structure comprises 502 residues: MSSNLPAAFANNFLGQSSTWYKTTILAFLVINPVVYAIDPFIAGWVLILEFIFTLAMALKCYPLQPGGLLAIEAVILGMTSPESVFHETEANFEVILLLIFMVAGIYFMKDLLLYVFTKILLGIRSKIVLSLLFSLVAAVLSAFLDALTVTAVLIAVAVGFYAVYHQFASGGGLSSNQYDHTDDSKVDSSNREDLEGFRSFLRSLIMHGAVGTALGGVCTLVGEPQNLLIAQQADWNFVEFFLQVAPVSMPTLIGGLVTCIAVEKLGIFGYGAQLPDKVRTILMDFDKQETSKRTNRDIAALVVQALAGVVLMVSLALHLAEVGLIGLLVIILLTSFNGITEEHRIGHAFEEALPFTALLVVFFAVVAVIHDQHLFEPITHMLLHMDESVQGPMFFIANGLLSMISDNVFVATVYITEVKNALVAGDISREHFDLLAVAINTGTNLPSVATPNGQAAFLFLLTSALAPLIRLSYGRMVLMALPYTIVLSVIGYIAVYQLAAG.

11 helical membrane-spanning segments follow: residues 27–49, 66–86, 95–115, 128–148, 149–169, 241–261, 299–318, 350–370, 394–414, 450–470, and 477–497; these read AFLV…VLIL, PGGL…ESVF, VILL…LLLY, IVLS…LDAL, TVTA…HQFA, FFLQ…VTCI, IAAL…SLAL, FEEA…VAVI, MFFI…VATV, ATPN…APLI, and MVLM…IAVY.

Belongs to the NhaB Na(+)/H(+) (TC 2.A.34) antiporter family.

It localises to the cell inner membrane. The enzyme catalyses 2 Na(+)(in) + 3 H(+)(out) = 2 Na(+)(out) + 3 H(+)(in). Its function is as follows. Na(+)/H(+) antiporter that extrudes sodium in exchange for external protons. In Teredinibacter turnerae (strain ATCC 39867 / T7901), this protein is Na(+)/H(+) antiporter NhaB.